Reading from the N-terminus, the 191-residue chain is Phosphoheptose isomerase (191 aa).

Residues 37–191 (IADSFKQDGK…IIQLIEKEME (155 aa)) enclose the SIS domain. 52-54 (NGG) serves as a coordination point for substrate. Residues His-61 and Glu-65 each contribute to the Zn(2+) site. Substrate-binding positions include Glu-65, 93 to 94 (ND), 119 to 121 (STS), Ser-124, and Gln-172. Positions 172 and 180 each coordinate Zn(2+).

It belongs to the SIS family. GmhA subfamily. In terms of assembly, homotetramer. Requires Zn(2+) as cofactor.

It is found in the cytoplasm. It catalyses the reaction 2 D-sedoheptulose 7-phosphate = D-glycero-alpha-D-manno-heptose 7-phosphate + D-glycero-beta-D-manno-heptose 7-phosphate. It functions in the pathway carbohydrate biosynthesis; D-glycero-D-manno-heptose 7-phosphate biosynthesis; D-glycero-alpha-D-manno-heptose 7-phosphate and D-glycero-beta-D-manno-heptose 7-phosphate from sedoheptulose 7-phosphate: step 1/1. It participates in bacterial outer membrane biogenesis; LPS core biosynthesis. In terms of biological role, catalyzes the isomerization of sedoheptulose 7-phosphate in D-glycero-D-manno-heptose 7-phosphate. This chain is Phosphoheptose isomerase, found in Vibrio parahaemolyticus serotype O3:K6 (strain RIMD 2210633).